We begin with the raw amino-acid sequence, 705 residues long: MGKTFNLTRREDGIAILTMDVPGETMNTLKAEFGPEISEILSEIKRDSSIRGLVLISGKKDSFVAGADISMLDACQTAGDAKALSQQGHVVFNELEALNIPVVAAIHGACLGGGLELALACHQRVCSDDGKTMLGVPEVQLGLLPGGGGTQRLPRLVGITTALDMMLTGKQIRPKQALKMGLVNDVVPQTILLQTAVEMALAGKQIAKPVKKSLVNQLLEGTGFGRNIIFDQAAKQVAKKTQGNYPAPAKIIDCVRQGIAKGMQKGLEVEASHFAELVVSKESEALRSIFFATTEMKKETGAEGATPRKVKKAVILGGGLMGGGIASVTTTKAKIPARVKDINEKGLSNALSYAYKLLDKGVKRRHMTPAARDNLMALMTTTTEYKGVKDADIVVEAVFEDLALKHQMVKDIERECGEHTIFASNTSSLPIGQIAQAASRPENVIGLHYFSPVEKMPLVEVIAHAKTSPETIATTVAFARKQGKTPIVVQDGAGFYVNRILALYMNEAAQLLLEGQSVEHLDKALVKFGFPVGPITLLDEVGIDVGAKISPILEKELGERFKAPAAFDKLLSDDRKGRKNGKGFYQYGAASKKKAVDETVYGVLGIKPGVDKEMSAVAERCVVQMLNEAVRCLDAGIIASPRDGDIGAIFGIGFPPFLGGPFHYIDTLGADNLVKILERYQTQYGDRFEPCQRLKAMAAEKARFF.

The tract at residues 1–188 is enoyl-CoA hydratase; that stretch reads MGKTFNLTRR…KMGLVNDVVP (188 aa). The segment at 308 to 705 is 3-hydroxyacyl-CoA dehydrogenase; it reads RKVKKAVILG…AMAAEKARFF (398 aa).

The protein in the N-terminal section; belongs to the enoyl-CoA hydratase/isomerase family. It in the central section; belongs to the 3-hydroxyacyl-CoA dehydrogenase family. In terms of assembly, heterotetramer of two alpha chains (FadJ) and two beta chains (FadI).

It localises to the cytoplasm. It carries out the reaction a (3S)-3-hydroxyacyl-CoA = a (2E)-enoyl-CoA + H2O. It catalyses the reaction a 4-saturated-(3S)-3-hydroxyacyl-CoA = a (3E)-enoyl-CoA + H2O. The enzyme catalyses a (3S)-3-hydroxyacyl-CoA + NAD(+) = a 3-oxoacyl-CoA + NADH + H(+). The catalysed reaction is (3S)-3-hydroxybutanoyl-CoA = (3R)-3-hydroxybutanoyl-CoA. It functions in the pathway lipid metabolism; fatty acid beta-oxidation. In terms of biological role, catalyzes the formation of a hydroxyacyl-CoA by addition of water on enoyl-CoA. Also exhibits 3-hydroxyacyl-CoA epimerase and 3-hydroxyacyl-CoA dehydrogenase activities. In Shewanella oneidensis (strain ATCC 700550 / JCM 31522 / CIP 106686 / LMG 19005 / NCIMB 14063 / MR-1), this protein is Fatty acid oxidation complex subunit alpha.